We begin with the raw amino-acid sequence, 334 residues long: Anthranilate phosphoribosyltransferase (334 aa).

5-phospho-alpha-D-ribose 1-diphosphate is bound by residues glycine 79, 82-83, serine 87, 89-92, 107-115, and serine 119; these read GD, NIST, and KHGNRSISS. Residue glycine 79 coordinates anthranilate. Serine 91 provides a ligand contact to Mg(2+). Anthranilate is bound at residue asparagine 110. Arginine 165 contributes to the anthranilate binding site. Mg(2+)-binding residues include aspartate 224 and glutamate 225.

This sequence belongs to the anthranilate phosphoribosyltransferase family. As to quaternary structure, homodimer. Mg(2+) serves as cofactor.

It carries out the reaction N-(5-phospho-beta-D-ribosyl)anthranilate + diphosphate = 5-phospho-alpha-D-ribose 1-diphosphate + anthranilate. It functions in the pathway amino-acid biosynthesis; L-tryptophan biosynthesis; L-tryptophan from chorismate: step 2/5. Its function is as follows. Catalyzes the transfer of the phosphoribosyl group of 5-phosphorylribose-1-pyrophosphate (PRPP) to anthranilate to yield N-(5'-phosphoribosyl)-anthranilate (PRA). This chain is Anthranilate phosphoribosyltransferase, found in Streptococcus pneumoniae serotype 19F (strain G54).